Consider the following 230-residue polypeptide: uncharacterized protein (230 aa).

The helical transmembrane segment at 17-37 (AGALSLGIGFFALASALWFLI) threads the bilayer. Asn-126 is a glycosylation site (N-linked (GlcNAc...) asparagine).

The protein localises to the membrane. This is an uncharacterized protein from Mus musculus (Mouse).